A 238-amino-acid polypeptide reads, in one-letter code: Uridylate kinase (238 aa).

12 to 15 (KLSG) provides a ligand contact to ATP. Gly54 contacts UMP. 2 residues coordinate ATP: Gly55 and Arg59. Residues Asp74 and 135–142 (TGNPFFTT) contribute to the UMP site. Residues Thr162, Tyr168, and Asp171 each contribute to the ATP site.

It belongs to the UMP kinase family. As to quaternary structure, homohexamer.

The protein resides in the cytoplasm. It catalyses the reaction UMP + ATP = UDP + ADP. It participates in pyrimidine metabolism; CTP biosynthesis via de novo pathway; UDP from UMP (UMPK route): step 1/1. Inhibited by UTP. Its function is as follows. Catalyzes the reversible phosphorylation of UMP to UDP. This Herminiimonas arsenicoxydans protein is Uridylate kinase.